The primary structure comprises 660 residues: Bifunctional polymyxin resistance protein ArnA (660 aa).

The segment at 1-304 (MKAIVFAYHD…EMGIVTDVRL (304 aa)) is formyltransferase ArnAFT. His-104 serves as the catalytic Proton donor; for formyltransferase activity. (6R)-10-formyltetrahydrofolate is bound by residues Arg-114 and 136–140 (VKRPD). The interval 314-660 (RRTRVLILGV…RTTVQEGDGA (347 aa)) is dehydrogenase ArnADH. NAD(+) is bound by residues Asp-347 and 368–369 (DI). UDP-alpha-D-glucuronate is bound by residues Ala-393, Tyr-398, and 432-433 (TS). Glu-434 (proton acceptor; for decarboxylase activity) is an active-site residue. UDP-alpha-D-glucuronate is bound by residues Arg-460, Asn-492, 526 to 535 (KLMDGGAQKR), and Tyr-613. Arg-619 serves as the catalytic Proton donor; for decarboxylase activity.

This sequence in the N-terminal section; belongs to the Fmt family. UDP-L-Ara4N formyltransferase subfamily. It in the C-terminal section; belongs to the NAD(P)-dependent epimerase/dehydratase family. UDP-glucuronic acid decarboxylase subfamily. Homohexamer, formed by a dimer of trimers.

It catalyses the reaction UDP-alpha-D-glucuronate + NAD(+) = UDP-beta-L-threo-pentopyranos-4-ulose + CO2 + NADH. The enzyme catalyses UDP-4-amino-4-deoxy-beta-L-arabinose + (6R)-10-formyltetrahydrofolate = UDP-4-deoxy-4-formamido-beta-L-arabinose + (6S)-5,6,7,8-tetrahydrofolate + H(+). The protein operates within nucleotide-sugar biosynthesis; UDP-4-deoxy-4-formamido-beta-L-arabinose biosynthesis; UDP-4-deoxy-4-formamido-beta-L-arabinose from UDP-alpha-D-glucuronate: step 1/3. Its pathway is nucleotide-sugar biosynthesis; UDP-4-deoxy-4-formamido-beta-L-arabinose biosynthesis; UDP-4-deoxy-4-formamido-beta-L-arabinose from UDP-alpha-D-glucuronate: step 3/3. It participates in bacterial outer membrane biogenesis; lipopolysaccharide biosynthesis. In terms of biological role, bifunctional enzyme that catalyzes the oxidative decarboxylation of UDP-glucuronic acid (UDP-GlcUA) to UDP-4-keto-arabinose (UDP-Ara4O) and the addition of a formyl group to UDP-4-amino-4-deoxy-L-arabinose (UDP-L-Ara4N) to form UDP-L-4-formamido-arabinose (UDP-L-Ara4FN). The modified arabinose is attached to lipid A and is required for resistance to polymyxin and cationic antimicrobial peptides. In Serratia proteamaculans (strain 568), this protein is Bifunctional polymyxin resistance protein ArnA.